The primary structure comprises 166 residues: Probable chemoreceptor glutamine deamidase CheD (166 aa).

The protein belongs to the CheD family.

The catalysed reaction is L-glutaminyl-[protein] + H2O = L-glutamyl-[protein] + NH4(+). In terms of biological role, probably deamidates glutamine residues to glutamate on methyl-accepting chemotaxis receptors (MCPs), playing an important role in chemotaxis. In Desulforamulus reducens (strain ATCC BAA-1160 / DSM 100696 / MI-1) (Desulfotomaculum reducens), this protein is Probable chemoreceptor glutamine deamidase CheD.